Here is a 460-residue protein sequence, read N- to C-terminus: GTPase Der (460 aa).

EngA-type G domains follow at residues 2–166 and 175–353; these read KTIA…AEER and TRIA…QERK. GTP contacts are provided by residues 8–15, 55–59, 118–121, 181–188, 228–232, and 293–296; these read GRPNVGKS, DTGGL, NKLD, GQPNAGKS, DTAGL, and NKID. The KH-like domain maps to 354–446; the sequence is KRIPTHRLTQ…LLWKWRKAEG (93 aa).

Belongs to the TRAFAC class TrmE-Era-EngA-EngB-Septin-like GTPase superfamily. EngA (Der) GTPase family. As to quaternary structure, associates with the 50S ribosomal subunit.

Functionally, GTPase that plays an essential role in the late steps of ribosome biogenesis. In Methylacidiphilum infernorum (isolate V4) (Methylokorus infernorum (strain V4)), this protein is GTPase Der.